The primary structure comprises 362 residues: Glucuronokinase 1 (362 aa).

Position 126–136 (126–136 (PRQTGLSGSSA)) interacts with ATP. The Proton acceptor role is filled by D179.

This sequence belongs to the GHMP kinase family. Mg(2+) serves as cofactor. Requires Mn(2+) as cofactor. Co(2+) is required as a cofactor. As to expression, highly expressed in pollen. Detected in seedlings, inflorescences, seeds, leaves and roots.

It catalyses the reaction D-glucuronate + ATP = 1-phospho-alpha-D-glucuronate + ADP + H(+). Functionally, sugar-1-kinase with a strict substrate specificity for D-glucuronic acid and ATP. Involved in the biosynthesis of UDP-glucuronic acid (UDP-GlcA), providing nucleotide sugars for cell-wall polymers. May be also involved in a salvage pathway for glucuronic acid. The sequence is that of Glucuronokinase 1 (GLCAK1) from Arabidopsis thaliana (Mouse-ear cress).